The following is a 449-amino-acid chain: Required for meiotic nuclear division protein 1 homolog (449 aa).

The N-terminal 12 residues, 1 to 12, are a transit peptide targeting the mitochondrion; it reads MPATLLRAVARS.

It belongs to the RMD1/sif2 family. In terms of assembly, homooligomer.

It localises to the mitochondrion. In terms of biological role, required for mitochondrial translation, possibly by coordinating the assembly or maintenance of the mitochondrial ribosome. In Homo sapiens (Human), this protein is Required for meiotic nuclear division protein 1 homolog (RMND1).